A 945-amino-acid polypeptide reads, in one-letter code: UvrABC system protein A (945 aa).

31-38 (GLSGSGKS) is an ATP binding site. The C4-type zinc-finger motif lies at 254–281 (CPVCGHSISELEPKLFSFNNPAGACPTC). 2 ABC transporter domains span residues 310-587 (WDRR…PDSL) and 607-937 (RDKK…HFLK). 640–647 (GVSGSGKS) contacts ATP. The C4-type zinc finger occupies 740 to 766 (CEACQGDGVIKVEMHFLPDIYVPCDVC).

It belongs to the ABC transporter superfamily. UvrA family. Forms a heterotetramer with UvrB during the search for lesions.

It is found in the cytoplasm. The UvrABC repair system catalyzes the recognition and processing of DNA lesions. UvrA is an ATPase and a DNA-binding protein. A damage recognition complex composed of 2 UvrA and 2 UvrB subunits scans DNA for abnormalities. When the presence of a lesion has been verified by UvrB, the UvrA molecules dissociate. The polypeptide is UvrABC system protein A (Pseudomonas aeruginosa (strain ATCC 15692 / DSM 22644 / CIP 104116 / JCM 14847 / LMG 12228 / 1C / PRS 101 / PAO1)).